Reading from the N-terminus, the 185-residue chain is uncharacterized protein (185 aa).

A chloroplast-targeting transit peptide spans 1 to 56 (MSSFTIPSPSSFSLSNSYNQTSPHSFTLRNSRSNFEFHRLRLDVESRRRSTSLRSN). A disordered region spans residues 48–67 (RRSTSLRSNCSTKGTDSGEN). Positions 52–64 (SLRSNCSTKGTDS) are enriched in polar residues. Residues 105 to 138 (QAEQQKQVQEIQEEVLERAKKAKERAARETMEEQ) adopt a coiled-coil conformation.

It is found in the plastid. Its subcellular location is the chloroplast. The protein resides in the plastoglobule. This is an uncharacterized protein from Arabidopsis thaliana (Mouse-ear cress).